Reading from the N-terminus, the 79-residue chain is MQKLTILLLVAAVLMSTQALIRGGVEKRQEAKRNFFSKRKTTAESWWEGECRTWYAPCNFPSQCCSEVCSSKTGRCLTW.

The N-terminal stretch at 1-19 (MQKLTILLLVAAVLMSTQA) is a signal peptide. Positions 20-50 (LIRGGVEKRQEAKRNFFSKRKTTAESWWEGE) are excised as a propeptide. Cystine bridges form between Cys51–Cys65, Cys58–Cys69, and Cys64–Cys76.

Belongs to the conotoxin O2 superfamily. As to expression, expressed by the venom duct.

Its subcellular location is the secreted. This is Conotoxin VnMEKL-024 from Conus ventricosus (Mediterranean cone).